The chain runs to 688 residues: Glycine--tRNA ligase beta subunit (688 aa).

This sequence belongs to the class-II aminoacyl-tRNA synthetase family. In terms of assembly, tetramer of two alpha and two beta subunits.

It localises to the cytoplasm. It catalyses the reaction tRNA(Gly) + glycine + ATP = glycyl-tRNA(Gly) + AMP + diphosphate. The chain is Glycine--tRNA ligase beta subunit from Syntrophotalea carbinolica (strain DSM 2380 / NBRC 103641 / GraBd1) (Pelobacter carbinolicus).